Here is a 391-residue protein sequence, read N- to C-terminus: uncharacterized protein (391 aa).

The next 12 helical transmembrane spans lie at 7 to 27, 39 to 59, 66 to 88, 92 to 111, 131 to 151, 156 to 176, 197 to 217, 239 to 259, 269 to 289, 292 to 312, 329 to 349, and 356 to 376; these read FILV…LPVI, AING…SPFM, LGFK…GFIW, VWVW…MLHF, SIYG…VPLV, SLPF…VFFL, FYQA…YGFL, VAII…PLGI, VLLV…VFPS, VIGG…TLGI, LLCG…GGWY, and ANLF…LVLG.

Belongs to the major facilitator superfamily.

Its subcellular location is the cell membrane. This is an uncharacterized protein from Bacillus subtilis (strain 168).